We begin with the raw amino-acid sequence, 90 residues long: Large ribosomal subunit protein bL27 (90 aa).

The segment covering 1 to 13 (MATKKSGGSSSNG) has biased composition (low complexity). Residues 1–20 (MATKKSGGSSSNGRDSRGRR) are disordered.

This sequence belongs to the bacterial ribosomal protein bL27 family.

The sequence is that of Large ribosomal subunit protein bL27 from Anaplasma marginale (strain Florida).